The primary structure comprises 640 residues: F-box only protein 43 (640 aa).

Residue T176 is modified to Phosphothreonine. At S275 the chain carries Phosphoserine. The disordered stretch occupies residues 328–354; it reads LQEQGQSEDEMQTVHPNSDSGVLESLQ. In terms of domain architecture, F-box spans 423–480; that stretch reads MGIEQLDILTELQYRNLKHILAMVLESLTSESLYSAWNVSRNWREIVAQDKKANRRRK. The segment at 568-616 adopts a ZBR-type zinc-finger fold; that stretch reads ALKPCPRCQSPAKYQPHKKRGLCSRLACGFDFCVLCLCAYHGSEDCRRG. 8 residues coordinate Zn(2+): C572, C575, C590, C595, C600, C603, H608, and C613. Residues 615–640 form a disordered region; it reads RGSAKARGSKDVLPGSAQSKRNLKRL.

As to quaternary structure, part of a SCF (SKP1-cullin-F-box) protein ligase complex. Interaction with SKP1 does not occur. Interacts with ANAPC2; the interaction is direct, ANAPC4, CDC16, CDC23; the interaction is direct, ANAPC10; the interaction is direct and CDC26, during spermatogenesis. Interacts with CDC20. Post-translationally, phosphorylated on Thr-176 and Ser-275 in response to calcium, which is a prerequisite for ubiquitination and proteasomal degradation. Ubiquitinated in response to calcium, which promotes proteasomal degradation. As to expression, present in testis and ovary (at protein level). Expression is high in immature oocytes, and diminishes after oocyte activation. Expressed post-meiotically in spermatids and sperm.

It functions in the pathway protein modification; protein ubiquitination. Its function is as follows. Required to establish and maintain the arrest of oocytes at the second meiotic metaphase until fertilization. Acts by inhibiting the anaphase-promoting complex/cyclosome (APC/C) ubiquitin ligase. Probably recognizes and binds to some phosphorylated proteins and promotes their ubiquitination and degradation. Plays a vital role in modulating the ubiquitilation of CCNB1 and CDK1 during gametogenesis. The sequence is that of F-box only protein 43 (Fbxo43) from Mus musculus (Mouse).